Consider the following 324-residue polypeptide: COP9 signalosome complex subunit 6 (324 aa).

Residues 38 to 171 form the MPN domain; that stretch reads VALHPLVILN…VSVFESVIDI (134 aa).

This sequence belongs to the peptidase M67A family. CSN6 subfamily. Component of the CSN complex, composed of COPS1/GPS1, COPS2, COPS3, COPS4, COPS5, COPS6, COPS7 (COPS7A or COPS7B), COPS8 and COPS9. In the complex, it probably interacts directly with COPS2, COPS4, COPS5, COPS7 (COPS7A or COPS7B) and COPS9. Interacts with the translation initiation factor EIF3S6. Interacts weakly with RBX1. Directly interacts with COP1 and 14-3-3 protein sigma/SFN. Interacts with ERCC6.

The protein localises to the cytoplasm. It localises to the nucleus. Component of the COP9 signalosome complex (CSN), a complex involved in various cellular and developmental processes. The CSN complex is an essential regulator of the ubiquitin (Ubl) conjugation pathway by mediating the deneddylation of the cullin subunits of SCF-type E3 ligase complexes, leading to decrease the Ubl ligase activity of SCF-type complexes such as SCF, CSA or DDB2. The complex is also involved in phosphorylation of p53/TP53, c-jun/JUN, IkappaBalpha/NFKBIA, ITPK1 and IRF8, possibly via its association with CK2 and PKD kinases. CSN-dependent phosphorylation of TP53 and JUN promotes and protects degradation by the Ubl system, respectively. Has some glucocorticoid receptor-responsive activity. Stabilizes COP1 through reducing COP1 auto-ubiquitination and decelerating COP1 turnover rate, hence regulates the ubiquitination of COP1 targets, including SFN. The sequence is that of COP9 signalosome complex subunit 6 (Cops6) from Mus musculus (Mouse).